Here is a 59-residue protein sequence, read N- to C-terminus: Cuticle protein 16 isoform D (59 aa).

In Limulus polyphemus (Atlantic horseshoe crab), this protein is Cuticle protein 16 isoform D.